The following is a 264-amino-acid chain: Hydroxyethylthiazole kinase (264 aa).

Met43 provides a ligand contact to substrate. 2 residues coordinate ATP: Arg119 and Thr165. Gly192 is a binding site for substrate.

This sequence belongs to the Thz kinase family. Requires Mg(2+) as cofactor.

It carries out the reaction 5-(2-hydroxyethyl)-4-methylthiazole + ATP = 4-methyl-5-(2-phosphooxyethyl)-thiazole + ADP + H(+). It participates in cofactor biosynthesis; thiamine diphosphate biosynthesis; 4-methyl-5-(2-phosphoethyl)-thiazole from 5-(2-hydroxyethyl)-4-methylthiazole: step 1/1. Functionally, catalyzes the phosphorylation of the hydroxyl group of 4-methyl-5-beta-hydroxyethylthiazole (THZ). This Anoxybacillus flavithermus (strain DSM 21510 / WK1) protein is Hydroxyethylthiazole kinase.